The sequence spans 59 residues: Large ribosomal subunit protein uL30 (59 aa).

This sequence belongs to the universal ribosomal protein uL30 family. In terms of assembly, part of the 50S ribosomal subunit.

This Listeria innocua serovar 6a (strain ATCC BAA-680 / CLIP 11262) protein is Large ribosomal subunit protein uL30.